We begin with the raw amino-acid sequence, 441 residues long: tRNA modification GTPase MnmE (441 aa).

Arginine 23, glutamate 81, and lysine 121 together coordinate (6S)-5-formyl-5,6,7,8-tetrahydrofolate. A TrmE-type G domain is found at 218–363 (GFRVAIVGPP…LESWIAAFVS (146 aa)). A K(+)-binding site is contributed by asparagine 228. Residues 228–233 (NAGKSS), 247–253 (TDIAGTT), 272–275 (DTAG), and 326–329 (NKAD) each bind GTP. Serine 232 is a binding site for Mg(2+). Residues threonine 247, isoleucine 249, and threonine 252 each coordinate K(+). Residue threonine 253 coordinates Mg(2+). Lysine 441 contacts (6S)-5-formyl-5,6,7,8-tetrahydrofolate.

The protein belongs to the TRAFAC class TrmE-Era-EngA-EngB-Septin-like GTPase superfamily. TrmE GTPase family. In terms of assembly, homodimer. Heterotetramer of two MnmE and two MnmG subunits. Requires K(+) as cofactor.

Its subcellular location is the cytoplasm. Functionally, exhibits a very high intrinsic GTPase hydrolysis rate. Involved in the addition of a carboxymethylaminomethyl (cmnm) group at the wobble position (U34) of certain tRNAs, forming tRNA-cmnm(5)s(2)U34. The protein is tRNA modification GTPase MnmE of Hyphomonas neptunium (strain ATCC 15444).